The primary structure comprises 331 residues: Pyruvate dehydrogenase E1 component subunit beta (331 aa).

Residue Glu60 participates in thiamine diphosphate binding. Positions 113, 161, 162, 164, and 166 each coordinate K(+).

As to quaternary structure, heterodimer of an alpha and a beta chain. The cofactor is thiamine diphosphate.

The protein resides in the plastid. Its subcellular location is the chloroplast. It carries out the reaction N(6)-[(R)-lipoyl]-L-lysyl-[protein] + pyruvate + H(+) = N(6)-[(R)-S(8)-acetyldihydrolipoyl]-L-lysyl-[protein] + CO2. Its function is as follows. The pyruvate dehydrogenase complex catalyzes the overall conversion of pyruvate to acetyl-CoA and CO(2). It contains multiple copies of three enzymatic components: pyruvate dehydrogenase (E1), dihydrolipoamide acetyltransferase (E2) and lipoamide dehydrogenase (E3). This is Pyruvate dehydrogenase E1 component subunit beta (pdhB) from Porphyra purpurea (Red seaweed).